The chain runs to 345 residues: Holliday junction branch migration complex subunit RuvB (345 aa).

The segment at 4–182 (PDRIVSAVQR…FGIPIRLEFY (179 aa)) is large ATPase domain (RuvB-L). Residues R22, G63, K66, T67, T68, 129-131 (EDY), R172, Y182, and R219 contribute to the ATP site. Residue T67 participates in Mg(2+) binding. The interval 183–253 (TVDELQAIVT…IADAALSRLE (71 aa)) is small ATPAse domain (RuvB-S). A head domain (RuvB-H) region spans residues 256-345 (ALGLDQLDRR…QSQINLFEEE (90 aa)). Residues R292, R311, and R316 each coordinate DNA.

Belongs to the RuvB family. Homohexamer. Forms an RuvA(8)-RuvB(12)-Holliday junction (HJ) complex. HJ DNA is sandwiched between 2 RuvA tetramers; dsDNA enters through RuvA and exits via RuvB. An RuvB hexamer assembles on each DNA strand where it exits the tetramer. Each RuvB hexamer is contacted by two RuvA subunits (via domain III) on 2 adjacent RuvB subunits; this complex drives branch migration. In the full resolvosome a probable DNA-RuvA(4)-RuvB(12)-RuvC(2) complex forms which resolves the HJ.

The protein resides in the cytoplasm. It catalyses the reaction ATP + H2O = ADP + phosphate + H(+). Functionally, the RuvA-RuvB-RuvC complex processes Holliday junction (HJ) DNA during genetic recombination and DNA repair, while the RuvA-RuvB complex plays an important role in the rescue of blocked DNA replication forks via replication fork reversal (RFR). RuvA specifically binds to HJ cruciform DNA, conferring on it an open structure. The RuvB hexamer acts as an ATP-dependent pump, pulling dsDNA into and through the RuvAB complex. RuvB forms 2 homohexamers on either side of HJ DNA bound by 1 or 2 RuvA tetramers; 4 subunits per hexamer contact DNA at a time. Coordinated motions by a converter formed by DNA-disengaged RuvB subunits stimulates ATP hydrolysis and nucleotide exchange. Immobilization of the converter enables RuvB to convert the ATP-contained energy into a lever motion, pulling 2 nucleotides of DNA out of the RuvA tetramer per ATP hydrolyzed, thus driving DNA branch migration. The RuvB motors rotate together with the DNA substrate, which together with the progressing nucleotide cycle form the mechanistic basis for DNA recombination by continuous HJ branch migration. Branch migration allows RuvC to scan DNA until it finds its consensus sequence, where it cleaves and resolves cruciform DNA. This chain is Holliday junction branch migration complex subunit RuvB, found in Chelativorans sp. (strain BNC1).